The primary structure comprises 354 residues: Protein FAM181A (354 aa).

2 stretches are compositionally biased toward basic and acidic residues: residues 1 to 14 (MPLE…ERND) and 129 to 142 (YLKR…RRLL). 3 disordered regions span residues 1–35 (MPLE…KQVS), 117–160 (LPRG…CKEK), and 172–193 (AKEQ…VPMR).

The protein belongs to the FAM181 family.

The chain is Protein FAM181A (FAM181A) from Homo sapiens (Human).